A 94-amino-acid chain; its full sequence is Co-chaperonin GroES (94 aa).

Belongs to the GroES chaperonin family. In terms of assembly, heptamer of 7 subunits arranged in a ring. Interacts with the chaperonin GroEL.

The protein resides in the cytoplasm. Its function is as follows. Together with the chaperonin GroEL, plays an essential role in assisting protein folding. The GroEL-GroES system forms a nano-cage that allows encapsulation of the non-native substrate proteins and provides a physical environment optimized to promote and accelerate protein folding. GroES binds to the apical surface of the GroEL ring, thereby capping the opening of the GroEL channel. In Halalkalibacterium halodurans (strain ATCC BAA-125 / DSM 18197 / FERM 7344 / JCM 9153 / C-125) (Bacillus halodurans), this protein is Co-chaperonin GroES.